The chain runs to 207 residues: Large ribosomal subunit protein uL4 (207 aa).

The segment at 45–80 (RQGTHAVKNRSEVRGGGRKPWRQKGTGRARQGSTRS) is disordered. Basic residues predominate over residues 60–71 (GGRKPWRQKGTG).

This sequence belongs to the universal ribosomal protein uL4 family. As to quaternary structure, part of the 50S ribosomal subunit.

One of the primary rRNA binding proteins, this protein initially binds near the 5'-end of the 23S rRNA. It is important during the early stages of 50S assembly. It makes multiple contacts with different domains of the 23S rRNA in the assembled 50S subunit and ribosome. Functionally, forms part of the polypeptide exit tunnel. The sequence is that of Large ribosomal subunit protein uL4 from Oceanobacillus iheyensis (strain DSM 14371 / CIP 107618 / JCM 11309 / KCTC 3954 / HTE831).